Consider the following 206-residue polypeptide: dTTP/UTP pyrophosphatase (206 aa).

Asp-79 (proton acceptor) is an active-site residue.

It belongs to the Maf family. YhdE subfamily. A divalent metal cation serves as cofactor.

It is found in the cytoplasm. It carries out the reaction dTTP + H2O = dTMP + diphosphate + H(+). The enzyme catalyses UTP + H2O = UMP + diphosphate + H(+). Functionally, nucleoside triphosphate pyrophosphatase that hydrolyzes dTTP and UTP. May have a dual role in cell division arrest and in preventing the incorporation of modified nucleotides into cellular nucleic acids. The chain is dTTP/UTP pyrophosphatase from Rhizobium johnstonii (strain DSM 114642 / LMG 32736 / 3841) (Rhizobium leguminosarum bv. viciae).